Here is a 157-residue protein sequence, read N- to C-terminus: 3-hydroxyacyl-[acyl-carrier-protein] dehydratase FabZ (157 aa).

His-58 is an active-site residue.

It belongs to the thioester dehydratase family. FabZ subfamily.

It localises to the cytoplasm. The catalysed reaction is a (3R)-hydroxyacyl-[ACP] = a (2E)-enoyl-[ACP] + H2O. Functionally, involved in unsaturated fatty acids biosynthesis. Catalyzes the dehydration of short chain beta-hydroxyacyl-ACPs and long chain saturated and unsaturated beta-hydroxyacyl-ACPs. This Brucella abortus biovar 1 (strain 9-941) protein is 3-hydroxyacyl-[acyl-carrier-protein] dehydratase FabZ.